Here is a 361-residue protein sequence, read N- to C-terminus: Chorismate synthase (361 aa).

Residues Arg-48 and Arg-54 each coordinate NADP(+). Residues 125-127 (RSS), 238-239 (NA), Gly-278, 293-297 (KPTSS), and Arg-319 contribute to the FMN site.

The protein belongs to the chorismate synthase family. As to quaternary structure, homotetramer. Requires FMNH2 as cofactor.

It carries out the reaction 5-O-(1-carboxyvinyl)-3-phosphoshikimate = chorismate + phosphate. The protein operates within metabolic intermediate biosynthesis; chorismate biosynthesis; chorismate from D-erythrose 4-phosphate and phosphoenolpyruvate: step 7/7. In terms of biological role, catalyzes the anti-1,4-elimination of the C-3 phosphate and the C-6 proR hydrogen from 5-enolpyruvylshikimate-3-phosphate (EPSP) to yield chorismate, which is the branch point compound that serves as the starting substrate for the three terminal pathways of aromatic amino acid biosynthesis. This reaction introduces a second double bond into the aromatic ring system. The chain is Chorismate synthase from Edwardsiella ictaluri (strain 93-146).